The following is a 256-amino-acid chain: Protein RGF1 INDUCIBLE TRANSCRIPTION FACTOR 1 (256 aa).

The segment at 21–59 adopts a B box-type zinc-finger fold; that stretch reads CPYHETAKKNERNVCCLDCCTSLCPHCVPSHRFHRLLQV.

Expressed predominantly in root meristematic zones.

It is found in the nucleus. Functionally, probable transcription factor that plays a central role in mediating RGF1 hormone peptide signaling leading to the production of reactive oxygen species (ROS) in roots to modulate meristem size and root growth, probably via oxidative post-translational modification of the transcription factor PLETHORA (e.g. PLT1 and PLT2). The chain is Protein RGF1 INDUCIBLE TRANSCRIPTION FACTOR 1 from Arabidopsis thaliana (Mouse-ear cress).